We begin with the raw amino-acid sequence, 414 residues long: Protein MAK11 (414 aa).

Ser-2 carries the post-translational modification N-acetylserine. WD repeat units follow at residues 50 to 78 (AHSL…RIYD), 90 to 135 (SHQG…MVWR), 147 to 177 (GHTA…RLWN), 189 to 221 (LRKY…LIYE), 238 to 267 (LMHI…HFYP), and 298 to 330 (GHTN…VVWD). 2 positions are modified to phosphoserine: Ser-376 and Ser-380. Thr-382 is modified (phosphothreonine).

Associates with 60S pre-ribosomal particles.

The protein localises to the nucleus. Its subcellular location is the nucleolus. It localises to the nucleus membrane. Functionally, essential for cell growth. Plays a role in assembly of 60S pre-ribosomal particles in the nucleolus. Also required for replication of the M1 double-stranded RNA of the L-A virus. This latter function may reflect an enhanced requirement for free 60S ribosomal particles for the translation of viral mRNAs which lack poly-A tails. The sequence is that of Protein MAK11 (MAK11) from Saccharomyces cerevisiae (strain ATCC 204508 / S288c) (Baker's yeast).